Here is a 131-residue protein sequence, read N- to C-terminus: Putative superoxide reductase (131 aa).

Fe cation contacts are provided by E15, H17, H45, H51, C115, and H118.

This sequence belongs to the desulfoferrodoxin family. The cofactor is Fe cation.

The enzyme catalyses reduced [rubredoxin] + superoxide + 2 H(+) = oxidized [rubredoxin] + H2O2. Uses electrons from reduced NADP, by way of rubredoxin and an oxidoreductase, to catalyze the reduction of superoxide to hydrogen peroxide. The protein is Putative superoxide reductase of Thermotoga maritima (strain ATCC 43589 / DSM 3109 / JCM 10099 / NBRC 100826 / MSB8).